A 142-amino-acid polypeptide reads, in one-letter code: Transcriptional regulator MraZ (142 aa).

2 SpoVT-AbrB domains span residues 5-46 (THPV…DRSE) and 75-118 (AAAQ…DSEA).

This sequence belongs to the MraZ family. Forms oligomers.

The protein resides in the cytoplasm. It localises to the nucleoid. This is Transcriptional regulator MraZ from Tropheryma whipplei (strain TW08/27) (Whipple's bacillus).